The primary structure comprises 124 residues: MAEPTPTTTLNIKIEFGGGLELLFSNQRSHKVSIPSLVPKDNTTSAKNPPPKDDLLKPADITYLIHHMRDHLLQEREELFVENGTVRPGILVLVNDTDWELEGEGDYVLKDGDEVVFISTLHGG.

Residues 34–53 form a disordered region; that stretch reads IPSLVPKDNTTSAKNPPPKD. Gly-124 is modified (1-thioglycine). Residue Gly-124 forms a Glycyl lysine isopeptide (Gly-Lys) (interchain with K-? in acceptor proteins) linkage.

This sequence belongs to the URM1 family. In terms of processing, C-terminal thiocarboxylation occurs in 2 steps, it is first acyl-adenylated (-COAMP) via the hesA/moeB/thiF part of UBA4, then thiocarboxylated (-COSH) via the rhodanese domain of UBA4.

Its subcellular location is the cytoplasm. The protein operates within tRNA modification; 5-methoxycarbonylmethyl-2-thiouridine-tRNA biosynthesis. In terms of biological role, acts as a sulfur carrier required for 2-thiolation of mcm(5)S(2)U at tRNA wobble positions of cytosolic tRNA(Lys), tRNA(Glu) and tRNA(Gln). Serves as sulfur donor in tRNA 2-thiolation reaction by being thiocarboxylated (-COSH) at its C-terminus by the MOCS3 homolog UBA4. The sulfur is then transferred to tRNA to form 2-thiolation of mcm(5)S(2)U. Prior mcm(5) tRNA modification by the elongator complex is required for 2-thiolation. Also acts as a ubiquitin-like protein (UBL) that is covalently conjugated via an isopeptide bond to lysine residues of target proteins such as AHP1. The thiocarboxylated form serves as substrate for conjugation and oxidative stress specifically induces the formation of UBL-protein conjugates. The polypeptide is Ubiquitin-related modifier 1 (Coprinopsis cinerea (strain Okayama-7 / 130 / ATCC MYA-4618 / FGSC 9003) (Inky cap fungus)).